A 410-amino-acid chain; its full sequence is 3-phenylpropionate/cinnamic acid dioxygenase ferredoxin--NAD(+) reductase component (410 aa).

5-36 (TIIIVGGGQAAAMAAASLRQQGFTGELHLFSD) is an FAD binding site. 146-184 (SVVIVGAGTIGLELAASATQRSAAQRSAAQRRCKVTVIE) contacts NAD(+).

It belongs to the bacterial ring-hydroxylating dioxygenase ferredoxin reductase family. This dioxygenase system consists of four proteins: the two subunits of the hydroxylase component (HcaE and HcaF), a ferredoxin (HcaC) and a ferredoxin reductase (HcaD). Requires FAD as cofactor.

The catalysed reaction is 2 reduced [2Fe-2S]-[ferredoxin] + NAD(+) + H(+) = 2 oxidized [2Fe-2S]-[ferredoxin] + NADH. Its pathway is aromatic compound metabolism; 3-phenylpropanoate degradation. Functionally, part of the multicomponent 3-phenylpropionate dioxygenase, that converts 3-phenylpropionic acid (PP) and cinnamic acid (CI) into 3-phenylpropionate-dihydrodiol (PP-dihydrodiol) and cinnamic acid-dihydrodiol (CI-dihydrodiol), respectively. The protein is 3-phenylpropionate/cinnamic acid dioxygenase ferredoxin--NAD(+) reductase component of Shigella flexneri serotype 5b (strain 8401).